The following is a 176-amino-acid chain: Mediator of RNA polymerase II transcription subunit 11 (176 aa).

Residues 98-176 (SRVRELEETK…MGGDSSMSTN (79 aa)) are disordered. A compositionally biased stretch (basic and acidic residues) spans 99 to 108 (RVRELEETKA). Residues 124-154 (HAAAQQQQQQQQQQQQQQQQMQQAAQQQQQQ) show a composition bias toward low complexity.

Belongs to the Mediator complex subunit 11 family. In terms of assembly, component of the Mediator complex, which may include CDK8, MED4, MED6, MED11, MED14, MED17, MED18, MED20, MED21, MED22, MED27, MED28, MED30 and MED31.

It localises to the nucleus. Component of the Mediator complex, a coactivator involved in the regulated transcription of nearly all RNA polymerase II-dependent genes. Mediator functions as a bridge to convey information from gene-specific regulatory proteins to the basal RNA polymerase II transcription machinery. Mediator is recruited to promoters by direct interactions with regulatory proteins and serves as a scaffold for the assembly of a functional pre-initiation complex with RNA polymerase II and the general transcription factors. This is Mediator of RNA polymerase II transcription subunit 11 (MED11) from Drosophila melanogaster (Fruit fly).